Consider the following 179-residue polypeptide: Large ribosomal subunit protein uL5 (179 aa).

Belongs to the universal ribosomal protein uL5 family. In terms of assembly, part of the 50S ribosomal subunit; part of the 5S rRNA/L5/L18/L25 subcomplex. Contacts the 5S rRNA and the P site tRNA. Forms a bridge to the 30S subunit in the 70S ribosome.

In terms of biological role, this is one of the proteins that bind and probably mediate the attachment of the 5S RNA into the large ribosomal subunit, where it forms part of the central protuberance. In the 70S ribosome it contacts protein S13 of the 30S subunit (bridge B1b), connecting the 2 subunits; this bridge is implicated in subunit movement. Contacts the P site tRNA; the 5S rRNA and some of its associated proteins might help stabilize positioning of ribosome-bound tRNAs. In Desulforapulum autotrophicum (strain ATCC 43914 / DSM 3382 / VKM B-1955 / HRM2) (Desulfobacterium autotrophicum), this protein is Large ribosomal subunit protein uL5.